The following is a 112-amino-acid chain: Protein BEX3 (112 aa).

The tract at residues 1–45 (MANIHQENEEMEQPVQNGEEDRPLGGGEGHQPERNHRRGQARRLA) is disordered. Residues 69–94 (EIFMEEMREIRRKLRELQLRNCLRIL) are interaction with p75NTR/NGFR. Residues 69-112 (EIFMEEMREIRRKLRELQLRNCLRILMGELSNHHDHHDEFCLMP) are interaction with 14-3-3 epsilon. The short motif at 78–88 (IRRKLRELQLR) is the Nuclear export signal element. A his cluster region spans residues 101 to 105 (HHDHH). C109 is a binding site for Zn(2+).

The protein belongs to the BEX family. Self-associates. Binds to the DEATH domain of p75NTR/NGFR. Interacts with 14-3-3 epsilon (YWHAE). Interacts with DIABLO/SMAC. In terms of processing, ubiquitinated. Degraded by the proteasome.

The protein resides in the nucleus. It is found in the cytoplasm. Its subcellular location is the cytosol. Functionally, may be a signaling adapter molecule involved in NGFR/p75NTR-mediated apoptosis induced by NGF. Plays a role in zinc-triggered neuronal death. In absence of reductive stress, acts as a pseudosubstrate for the CRL2(FEM1B) complex: associates with FEM1B via zinc, thereby preventing association between FEM1B and its substrates. In Bos taurus (Bovine), this protein is Protein BEX3.